Consider the following 1408-residue polypeptide: Protein patched homolog 1 (1408 aa).

The disordered stretch occupies residues 1-20 (MLTLLEPPGAKRSPTVGNYN). The Cytoplasmic portion of the chain corresponds to 1-136 (MLTLLEPPGA…GNTVHRNAWS (136 aa)). A helical membrane pass occupies residues 137–157 (IILAVSMIFAVCCYGLQYVHI). At 158–649 (ETDIVKLWVA…STSIADMLEE (492 aa)) the chain is on the extracellular side. The interval 455 to 479 (STAPIPTTTTLSPEEARAAEEKEKK) is disordered. The span at 468 to 479 (EEARAAEEKEKK) shows a compositional bias: basic and acidic residues. N599 carries an N-linked (GlcNAc...) asparagine glycan. Residues 650–670 (FCQFNYTIILAGYALMLAYAI) traverse the membrane as a helical segment. The SSD domain maps to 654-816 (NYTIILAGYA…LTIYPAIISI (163 aa)). Over 671 to 686 (VTQARFDNCLPATESS) the chain is Cytoplasmic. Residues 687–707 (MGLALAGVLVVTFASVAGLGL) traverse the membrane as a helical segment. Topologically, residues 708 to 709 (AT) are extracellular. A helical transmembrane segment spans residues 710 to 730 (WFGIEFNAATTQIVPFLTLGI). Over 731–765 (GVDNMFMLLHNYRDVVKLAGGHAEMAILMRETGMS) the chain is Cytoplasmic. The helical transmembrane segment at 766–786 (ILCTSINNILSFLTGTLLPIP) threads the bilayer. Topologically, residues 787 to 795 (ALRSFCAQS) are extracellular. The chain crosses the membrane as a helical span at residues 796-816 (SILLTFNFIAILTIYPAIISI). Over 817 to 901 (DLRRKKAQRR…YYYIPFISKP (85 aa)) the chain is Cytoplasmic. Residues 902–922 (ASKVAIIVGCCALLGASFIGM) form a helical membrane-spanning segment. The Extracellular segment spans residues 923 to 1175 (RQSTLGLELG…QGIAFTFWEQ (253 aa)). Residues N1026 and N1036 are each glycosylated (N-linked (GlcNAc...) asparagine). A helical membrane pass occupies residues 1176-1196 (YLFLTGNLMQAISIITISVFC). The Cytoplasmic segment spans residues 1197-1217 (VISVLLFNPWAALMVVCILGI). 2 helical membrane passes run 1218–1238 (MTCELAGFMGLVGIKLNPVSA) and 1239–1259 (VTLITAVGIGVEFTVHVVVSF). Over 1260 to 1276 (LTALGTRSQRTSSAVDR) the chain is Extracellular. The helical transmembrane segment at 1277–1297 (VFVPVIHGSFSTLLGILMLGF) threads the bilayer. The Cytoplasmic portion of the chain corresponds to 1298 to 1305 (SEFEFVVK). The chain crosses the membrane as a helical span at residues 1306–1326 (YFFIVMTALICIGIINGLILL). Residues 1327–1408 (PVLLSWFGPR…GNNTRRLPAV (82 aa)) are Extracellular-facing. A disordered region spans residues 1342 to 1408 (TGGKTTLTLP…GNNTRRLPAV (67 aa)). Residues 1387–1408 (TTRTSGGNRGTVGNNTRRLPAV) are compositionally biased toward low complexity.

The protein belongs to the patched family. As to expression, germ line and its progenitors.

Its subcellular location is the membrane. Its function is as follows. Required but not essential for cytokinesis of mitotically proliferating germ cells. This Caenorhabditis elegans protein is Protein patched homolog 1 (ptc-1).